A 158-amino-acid chain; its full sequence is Small ribosomal subunit protein uS9 (158 aa).

The disordered stretch occupies residues 1–20; the sequence is MTEAVETETVEPTTDEATAA. Residues 10–20 are compositionally biased toward low complexity; the sequence is VEPTTDEATAA.

It belongs to the universal ribosomal protein uS9 family.

The chain is Small ribosomal subunit protein uS9 from Mycobacterium sp. (strain JLS).